The primary structure comprises 240 residues: Zinc finger CCCH domain-containing protein 52 (240 aa).

2 disordered regions span residues 1–37 (MDAR…GLGS) and 81–106 (SQVS…PGSG). Residues 36–64 (GSKSKPCTKFFSTSGCPFGDNCHFLHYVP) form a C3H1-type 1 zinc finger. Over residues 89–104 (GSGGPGGRFSGRGDPG) the composition is skewed to gly residues. A KH domain is found at 113–177 (ASTSKISVDA…EQINVASGMV (65 aa)). The C3H1-type 2 zinc finger occupies 205–232 (NYKTKICDRYSKGNCTYGDRCHFAHGES).

This Arabidopsis thaliana (Mouse-ear cress) protein is Zinc finger CCCH domain-containing protein 52.